The primary structure comprises 260 residues: tRNA1(Val) (adenine(37)-N6)-methyltransferase (260 aa).

Belongs to the methyltransferase superfamily. tRNA (adenine-N(6)-)-methyltransferase family.

Its subcellular location is the cytoplasm. The enzyme catalyses adenosine(37) in tRNA1(Val) + S-adenosyl-L-methionine = N(6)-methyladenosine(37) in tRNA1(Val) + S-adenosyl-L-homocysteine + H(+). Its function is as follows. Specifically methylates the adenine in position 37 of tRNA(1)(Val) (anticodon cmo5UAC). This Serratia proteamaculans (strain 568) protein is tRNA1(Val) (adenine(37)-N6)-methyltransferase.